A 153-amino-acid chain; its full sequence is MKPRHKRLAIAGGVLVAVGAIATLVLNAFQSNLVFFYSPSQVVAKEVPDGRTFRLGGMVEDGSVKREGVMVSFVVTDTVQKVPVRFEGILPDLFKEGKGVVAQGKVEGGTFIAKEVLAKHDENYMPPEAAEALKRAKEGGQMQSSQAATGDPR.

Residues 1-7 (MKPRHKR) lie on the Cytoplasmic side of the membrane. A helical; Signal-anchor for type II membrane protein membrane pass occupies residues 8-28 (LAIAGGVLVAVGAIATLVLNA). Topologically, residues 29 to 153 (FQSNLVFFYS…SSQAATGDPR (125 aa)) are periplasmic. 2 residues coordinate heme: histidine 120 and tyrosine 124. The disordered stretch occupies residues 130-153 (AEALKRAKEGGQMQSSQAATGDPR). A compositionally biased stretch (polar residues) spans 141-153 (QMQSSQAATGDPR).

The protein belongs to the CcmE/CycJ family.

Its subcellular location is the cell inner membrane. Heme chaperone required for the biogenesis of c-type cytochromes. Transiently binds heme delivered by CcmC and transfers the heme to apo-cytochromes in a process facilitated by CcmF and CcmH. This chain is Cytochrome c-type biogenesis protein CcmE, found in Leptothrix cholodnii (strain ATCC 51168 / LMG 8142 / SP-6) (Leptothrix discophora (strain SP-6)).